The following is a 254-amino-acid chain: Galactitol 2-dehydrogenase (L-tagatose-forming) (254 aa).

NAD(+) is bound by residues 21–23 (SGI), Asp42, 66–67 (DV), Tyr159, Lys163, and 192–194 (VAT). The Proton acceptor role is filled by Tyr159. Trp254 lines the Mg(2+) pocket.

The protein belongs to the short-chain dehydrogenases/reductases (SDR) family. In terms of assembly, homotetramer. Requires a divalent metal cation as cofactor.

It carries out the reaction galactitol + NAD(+) = keto-L-tagatose + NADH + H(+). With respect to regulation, inhibited by the chelating agents EDTA and alpha,alpha'-dipyridyl. Inhibited by Zn(2+) and Fe(2+). In terms of biological role, catalyzes the interconversion of galactitol to the rare sugar L-tagatose. Shows activity with a wide range of substrates, and catalyzes the oxidation of a variety of polyvalent aliphatic alcohols and polyols to the corresponding ketones and ketoses, respectively, and in the reverse reaction, it reduces ketones with high stereoselectivity yielding the corresponding S-configurated alcohols. Shows high activity with D-threitol, xylitol, 1,2-hexanediol, 1,2-pentanediol, 2-hexanol, L-erythrulose, D-ribulose and acetoin. Specific for NAD(+). This is Galactitol 2-dehydrogenase (L-tagatose-forming) from Cereibacter sphaeroides (Rhodobacter sphaeroides).